A 136-amino-acid chain; its full sequence is Transcription antitermination protein NusB (136 aa).

It belongs to the NusB family.

In terms of biological role, involved in transcription antitermination. Required for transcription of ribosomal RNA (rRNA) genes. Binds specifically to the boxA antiterminator sequence of the ribosomal RNA (rrn) operons. The chain is Transcription antitermination protein NusB from Salinispora tropica (strain ATCC BAA-916 / DSM 44818 / JCM 13857 / NBRC 105044 / CNB-440).